The following is a 182-amino-acid chain: Fucoxanthin-chlorophyll a-c binding protein D, chloroplastic (182 aa).

A chloroplast-targeting transit peptide spans 1–4 (AMKM). The next 3 helical transmembrane spans lie at 46–66 (IAML…PGML), 87–107 (IPPG…LAVM), and 148–168 (GRAA…NNKP).

Belongs to the fucoxanthin chlorophyll protein family. The LHC complex of chromophytic algae is composed of fucoxanthin, chlorophyll A and C bound non-covalently by fucoxanthin chlorophyll proteins (FCPs). The ratio of pigments in this LHC is; fucoxanthin: chlorophyll C: chlorophyll A; (0.6-1): (0.1-0.3): (1).

The protein localises to the plastid. It localises to the chloroplast thylakoid membrane. In terms of biological role, the light-harvesting complex (LHC) functions as a light receptor, it captures and delivers excitation energy to photosystems with which it is closely associated. Energy is transferred from the carotenoid and chlorophyll C (or B) to chlorophyll A and the photosynthetic reaction centers where it is used to synthesize ATP and reducing power. This is Fucoxanthin-chlorophyll a-c binding protein D, chloroplastic (FCPD) from Macrocystis pyrifera (Giant kelp).